Consider the following 590-residue polypeptide: Multidrug resistance ABC transporter ATP-binding and permease protein (590 aa).

A run of 6 helical transmembrane segments spans residues 35–55 (YLFFVIGIVAGIIGTLIQLQV), 79–99 (IALYIGSAAVSAIAAIVLGIF), 150–170 (IPQAFTSILLLVGSIIFMLQM), 176–196 (LAMIIAVPIVMLIMFPIMTFG), 261–281 (VMMLSMMLMIFGLLAYGIYLI), and 292–312 (LGMMMYLMNLIGVVPTVATFF). Residues 38 to 317 (FVIGIVAGII…VATFFTELAK (280 aa)) form the ABC transmembrane type-1 domain. Residues 349-584 (LSAHHVDFAY…HPLYAKYVSE (236 aa)) form the ABC transporter domain. 382–389 (GPSGGGKS) is an ATP binding site.

The protein belongs to the ABC transporter superfamily. Multidrug exporter LmrA (TC 3.A.1.117.1) family. In terms of assembly, homodimer.

It localises to the cell membrane. The catalysed reaction is ATP + H2O + xenobioticSide 1 = ADP + phosphate + xenobioticSide 2.. Its function is as follows. Efflux transporter for a variety of amphiphilic cationic compounds, including antibiotics. In Lactococcus lactis subsp. cremoris (strain MG1363), this protein is Multidrug resistance ABC transporter ATP-binding and permease protein (lmrA).